Here is a 306-residue protein sequence, read N- to C-terminus: Glutaminase (306 aa).

Substrate contacts are provided by Ser-64, Asn-115, Glu-159, Asn-166, Tyr-190, Tyr-242, and Val-260.

The protein belongs to the glutaminase family. In terms of assembly, homotetramer.

The enzyme catalyses L-glutamine + H2O = L-glutamate + NH4(+). The sequence is that of Glutaminase from Aeromonas hydrophila subsp. hydrophila (strain ATCC 7966 / DSM 30187 / BCRC 13018 / CCUG 14551 / JCM 1027 / KCTC 2358 / NCIMB 9240 / NCTC 8049).